We begin with the raw amino-acid sequence, 322 residues long: Phospho-N-acetylmuramoyl-pentapeptide-transferase (322 aa).

Helical transmembrane passes span 6–26 (ASCI…PLLI), 54–74 (TMGG…VTAW), 82–102 (VWIL…DDGI), 122–142 (IIIA…FGLY), 145–165 (FAGV…WLVG), 176–196 (LDGL…YIAF), 200–220 (NFAI…FFIF), 227–247 (IFMG…VSIM), 255–275 (LLVG…VISF), and 302–322 (VDIV…AIWG).

The protein belongs to the glycosyltransferase 4 family. MraY subfamily. Requires Mg(2+) as cofactor.

The protein resides in the cell membrane. It carries out the reaction UDP-N-acetyl-alpha-D-muramoyl-L-alanyl-gamma-D-glutamyl-L-lysyl-D-alanyl-D-alanine + di-trans,octa-cis-undecaprenyl phosphate = Mur2Ac(oyl-L-Ala-gamma-D-Glu-L-Lys-D-Ala-D-Ala)-di-trans,octa-cis-undecaprenyl diphosphate + UMP. The protein operates within cell wall biogenesis; peptidoglycan biosynthesis. Its function is as follows. Catalyzes the initial step of the lipid cycle reactions in the biosynthesis of the cell wall peptidoglycan: transfers peptidoglycan precursor phospho-MurNAc-pentapeptide from UDP-MurNAc-pentapeptide onto the lipid carrier undecaprenyl phosphate, yielding undecaprenyl-pyrophosphoryl-MurNAc-pentapeptide, known as lipid I. The sequence is that of Phospho-N-acetylmuramoyl-pentapeptide-transferase from Lactobacillus helveticus (strain DPC 4571).